Consider the following 401-residue polypeptide: MVGPGLGINQVRRKGVYSTKKGSGDNLLLMKRQGKHDIHDRESDDLSGHDAFSPSKKRGKIDSITEDEIEVKKLSTVATFDKLSRSFPNSEVQAAKNAALRGKEKEEEKVVSIPLIQNLKNEDIESIKCRNNNLLDGKKLLLEAELSAVEDNQIFSSSFPEDKKLSLQSCLSSKEQIIKKLQVREEYMSKFKLPPMLFSDELLTEVEPFMPIVMDILEGKISSAYYFEAKNAFKNSQKAYLSVDEFRKLNLNKFTAGFYGLKRQLRVGEEIAKRYKRALTHNQPATLKWWGITDFCNYVLAPETLTSFCIYQLNLSNKSCSSKTPNKHPKQQLNEKEYYYDPELRMLAYDLLEDTVEYGIIVADSDPIEQWEAAIEEDRLRELKLDVHNYSSRRWRLDTHD.

Residue serine 23 is modified to Phosphoserine. Positions 35 to 48 (KHDIHDRESDDLSG) are enriched in basic and acidic residues. Residues 35-59 (KHDIHDRESDDLSGHDAFSPSKKRG) are disordered.

It belongs to the RTC4 family.

The protein localises to the cytoplasm. It localises to the nucleus. May be involved in a process influencing telomere capping. The chain is Restriction of telomere capping protein 4 (RTC4) from Saccharomyces cerevisiae (strain YJM789) (Baker's yeast).